The primary structure comprises 167 residues: Protein-export protein SecB (167 aa).

Belongs to the SecB family. Homotetramer, a dimer of dimers. One homotetramer interacts with 1 SecA dimer.

It localises to the cytoplasm. One of the proteins required for the normal export of preproteins out of the cell cytoplasm. It is a molecular chaperone that binds to a subset of precursor proteins, maintaining them in a translocation-competent state. It also specifically binds to its receptor SecA. The sequence is that of Protein-export protein SecB from Wolbachia sp. subsp. Brugia malayi (strain TRS).